We begin with the raw amino-acid sequence, 396 residues long: L-cysteine desulfidase (396 aa).

Residue Cys23 is the Proton acceptor of the active site. Residues Cys288, Cys330, and Cys337 each coordinate [4Fe-4S] cluster.

Belongs to the L-cysteine desulfidase family. In terms of assembly, homotrimer. [4Fe-4S] cluster is required as a cofactor.

It carries out the reaction L-cysteine + H2O = hydrogen sulfide + pyruvate + NH4(+) + H(+). In terms of biological role, catalyzes the cleavage of L-cysteine to form 2-aminoprop-2-enoate and sulfide. The former then spontaneously hydrolyzes to pyruvate and NH(3). May be responsible for the production of sulfide required for the biosynthesis of iron-sulfur centers in this archaea. The protein is L-cysteine desulfidase of Methanococcus maripaludis (strain C6 / ATCC BAA-1332).